Reading from the N-terminus, the 627-residue chain is DNA mismatch repair protein MutL (627 aa).

This sequence belongs to the DNA mismatch repair MutL/HexB family.

Its function is as follows. This protein is involved in the repair of mismatches in DNA. It is required for dam-dependent methyl-directed DNA mismatch repair. May act as a 'molecular matchmaker', a protein that promotes the formation of a stable complex between two or more DNA-binding proteins in an ATP-dependent manner without itself being part of a final effector complex. The chain is DNA mismatch repair protein MutL from Mesorhizobium japonicum (strain LMG 29417 / CECT 9101 / MAFF 303099) (Mesorhizobium loti (strain MAFF 303099)).